A 108-amino-acid polypeptide reads, in one-letter code: uncharacterized protein (108 aa).

Transmembrane regions (helical) follow at residues 5 to 27 and 83 to 105; these read TVYG…QLEI and IFLM…LNIF.

It is found in the membrane. This is an uncharacterized protein from Schizosaccharomyces pombe (strain 972 / ATCC 24843) (Fission yeast).